Here is a 191-residue protein sequence, read N- to C-terminus: dTTP/UTP pyrophosphatase (191 aa).

The Proton acceptor role is filled by Asp-69.

It belongs to the Maf family. YhdE subfamily. Requires a divalent metal cation as cofactor.

It localises to the cytoplasm. It carries out the reaction dTTP + H2O = dTMP + diphosphate + H(+). The enzyme catalyses UTP + H2O = UMP + diphosphate + H(+). Its function is as follows. Nucleoside triphosphate pyrophosphatase that hydrolyzes dTTP and UTP. May have a dual role in cell division arrest and in preventing the incorporation of modified nucleotides into cellular nucleic acids. In Pelotomaculum thermopropionicum (strain DSM 13744 / JCM 10971 / SI), this protein is dTTP/UTP pyrophosphatase.